Consider the following 1058-residue polypeptide: Leucine-rich repeat and coiled-coil domain-containing protein PF3D7_0703800 (1058 aa).

Over residues 1-10 the composition is skewed to basic residues; sequence MAIKKKKKET. A disordered region spans residues 1-34; it reads MAIKKKKKETKSKDNNNDNLRNEKKSTNLENGKY. A compositionally biased stretch (basic and acidic residues) spans 11 to 34; the sequence is KSKDNNNDNLRNEKKSTNLENGKY. A coiled-coil region spans residues 515–544; it reads LKQLYTFIKNYENNNDKLNIKSQIINKDKN. Over residues 641–661 the composition is skewed to basic and acidic residues; the sequence is ENKDHLQHEEHTHEEEPKDAN. Disordered regions lie at residues 641 to 665 and 706 to 728; these read ENKDHLQHEEHTHEEEPKDANGDMV and NIEDKSGDMENMKEPNGDMENMK. A coiled-coil region spans residues 872–905; the sequence is NYDHTQENILKNKNNMEDQNNLLEQNIMTDQLQN.

The sequence is that of Leucine-rich repeat and coiled-coil domain-containing protein PF3D7_0703800 from Plasmodium falciparum (isolate 3D7).